A 765-amino-acid polypeptide reads, in one-letter code: Myotubularin-related protein 10-A (765 aa).

A Myotubularin phosphatase domain is found at 209–650 (FETYSDWDRE…THIKLWKLCY (442 aa)).

Belongs to the protein-tyrosine phosphatase family. Non-receptor class myotubularin subfamily.

The protein is Myotubularin-related protein 10-A (mtmr10-a) of Xenopus laevis (African clawed frog).